The following is a 951-amino-acid chain: Protein translocase subunit SecA (951 aa).

ATP-binding positions include Gln90, 108–112 (GEGKT), and Asp509.

Belongs to the SecA family. In terms of assembly, monomer and homodimer. Part of the essential Sec protein translocation apparatus which comprises SecA, SecYEG and auxiliary proteins SecDF. Other proteins may also be involved.

The protein resides in the cell inner membrane. Its subcellular location is the cellular thylakoid membrane. It localises to the cytoplasm. It catalyses the reaction ATP + H2O + cellular proteinSide 1 = ADP + phosphate + cellular proteinSide 2.. In terms of biological role, part of the Sec protein translocase complex. Interacts with the SecYEG preprotein conducting channel. Has a central role in coupling the hydrolysis of ATP to the transfer of proteins into and across the cell membrane, serving as an ATP-driven molecular motor driving the stepwise translocation of polypeptide chains across the membrane. Functionally, probably participates in protein translocation into and across both the cytoplasmic and thylakoid membranes in cyanobacterial cells. In Prochlorococcus marinus (strain MIT 9303), this protein is Protein translocase subunit SecA.